The chain runs to 413 residues: F-box protein CPR1 (413 aa).

Positions 1–48 (MATIPMDIVNDIFLRLPAKTLVRCRALSKPCYHLINDPDFIESHLHRV) constitute an F-box domain.

As to quaternary structure, part of a SCF (ASK-cullin-F-box) protein ligase complex. Interacts with SKP1A/ASK1, SPK1B/ASK2, ASK9, ASK10, ASK11, ASK13, ASK14, ASK16, ASK17, ASK18 and ASK19. Interacts with TRAF1B. In terms of tissue distribution, expressed in seedling, root, stem, leaves, inflorescence and silique, especially in veins and trichomes.

It is found in the cytoplasm. Its subcellular location is the nucleus. The protein operates within protein modification; protein ubiquitination. Functionally, component of SCF(ASK-cullin-F-box) E3 ubiquitin ligase complexes, which may mediate the ubiquitination and subsequent proteasomal degradation of target proteins. Regulates negatively both salicylic acid (SA)-dependent and SA-independent defense signaling. This is F-box protein CPR1 (CPR1) from Arabidopsis thaliana (Mouse-ear cress).